The chain runs to 365 residues: GDSL lipase (365 aa).

Positions 1–27 (MAVASRKLGALVLVAVLCLSLPTGCLS) are cleaved as a signal peptide. Serine 40 (nucleophile) is an active-site residue. N-linked (GlcNAc...) asparagine glycans are attached at residues asparagine 189 and asparagine 310. Residues aspartate 318 and histidine 321 each act as charge relay system in the active site.

This sequence belongs to the 'GDSL' lipolytic enzyme family. In terms of tissue distribution, restricted to the pericarp during achene maturation. Expressed in the leaves of mature plants and seedlings, as well as in buds and flowers. Present in disk florets.

The protein resides in the secreted. The protein localises to the extracellular space. It carries out the reaction (Z,S)-pyrethrolone + (1R,3R)-chrysanthemoyl-CoA = pyrethrin I + CoA. It catalyses the reaction (Z,S)-pyrethrolone + (1R,3R)-pyrethroyl-CoA = pyrethrin II + CoA. The catalysed reaction is (Z,S)-jasmololone + (1R,3R)-chrysanthemoyl-CoA = jasmolin I + CoA. The enzyme catalyses (Z,S)-cinerolone + (1R,3R)-chrysanthemoyl-CoA = cinerin I + CoA. It carries out the reaction (Z,S)-jasmololone + (1R,3R)-pyrethroyl-CoA = jasmolin II + CoA. It catalyses the reaction (Z,S)-cinerolone + (1R,3R)-pyrethroyl-CoA = cinerin II + CoA. It functions in the pathway isoprenoid biosynthesis. Its function is as follows. Component of the monoterpenoid pyrethrins biosynthesis; pyrethrins are widely used plant-derived pesticide. Acyltransferase that catalyzes the esterification of terpene acids and lipid alcohol substrates into pyrethrins; mediates the transfer of a chrysanthemoyl moiety from the coenzyme A (CoA) thio-ester chrysanthemoyl CoA to pyrethrolone, and, to a lower extent, to jasmololone and cinerolone thus producing pyrethrins (e.g. pyrethrin type I). Can also use pyrethroyl CoA as substrate. Also has esterase activity, being able to cleave the ester bond of pyrethrin I, p-nitrophenyl butanoate and p-nitrophenyl octanoate to produce pyrethrolone and p-nitrophenol, respectively. The sequence is that of GDSL lipase from Tanacetum cinerariifolium (Dalmatian daisy).